A 320-amino-acid polypeptide reads, in one-letter code: Endochitinase (320 aa).

A signal peptide spans 1–23 (MKRTLKVSFFILCLLPLFLGSKA). The Chitin-binding type-1 domain maps to 24-64 (EQCGSQAGGAVCPNGLCCSKFGFCGSTDPYCGDGCQSQCKS). Intrachain disulfides connect Cys-26–Cys-41, Cys-35–Cys-47, Cys-40–Cys-54, Cys-58–Cys-62, Cys-101–Cys-163, Cys-175–Cys-182, and Cys-281–Cys-313. The active-site Proton donor is Glu-145.

This sequence belongs to the glycosyl hydrolase 19 family. Chitinase class I subfamily.

The enzyme catalyses Random endo-hydrolysis of N-acetyl-beta-D-glucosaminide (1-&gt;4)-beta-linkages in chitin and chitodextrins.. Defense against chitin-containing fungal pathogens. The protein is Endochitinase of Pisum sativum (Garden pea).